The sequence spans 569 residues: Potassium-transporting ATPase potassium-binding subunit (569 aa).

Transmembrane regions (helical) follow at residues glycine 5–valine 25, glycine 65–leucine 85, leucine 135–leucine 155, leucine 179–proline 199, leucine 254–phenylalanine 274, alanine 286–glutamate 306, glycine 383–glycine 403, leucine 422–leucine 442, methionine 489–glycine 509, and glycine 528–phenylalanine 548.

It belongs to the KdpA family. The system is composed of three essential subunits: KdpA, KdpB and KdpC.

Its subcellular location is the cell inner membrane. Part of the high-affinity ATP-driven potassium transport (or Kdp) system, which catalyzes the hydrolysis of ATP coupled with the electrogenic transport of potassium into the cytoplasm. This subunit binds the periplasmic potassium ions and delivers the ions to the membrane domain of KdpB through an intramembrane tunnel. The protein is Potassium-transporting ATPase potassium-binding subunit of Caulobacter sp. (strain K31).